A 721-amino-acid chain; its full sequence is Protein quick-to-court (721 aa).

Disordered regions lie at residues 1-42 (MMTS…RIPH), 143-210 (VGNS…ASVA), 360-379 (SSPEERSASSDAVTVREAEL), 393-428 (DEGNAKGSPRHLSRQQQQQANHSLQAMQMSAEMQSS), and 441-471 (SSVHSKDSQTQSEACGTATPDGEADVGCGAG). The segment covering 17–31 (QVQREKDNDSAEDSH) has biased composition (basic and acidic residues). Positions 161-201 (NGGSDISSSGTSSSSSNNKESSPRTTRTPRTPQTPQTPQTP) are enriched in low complexity. A compositionally biased stretch (basic and acidic residues) spans 362-379 (PEERSASSDAVTVREAEL). Positions 406–420 (RQQQQQANHSLQAMQ) are enriched in low complexity. The segment covering 441–454 (SSVHSKDSQTQSEA) has biased composition (polar residues). The stretch at 511-569 (KRSHNDKVEALLQKLAECNTRYSDMVPDYEQAKQRIRELEKQLEDLQRKLIEHEEKQNK) forms a coiled coil. Positions 668 to 716 (HVDPEVTLQFLKSAIFYFLTDKENSQGHLQAIESILEFTDAEKQKISAA) constitute a GRIP domain.

As to expression, expressed in the third antennal segment and the maxillary palp, with increased expression near the cuticle of both olfactory organs. Also detected in the second antenna segment. In the brain, expressed in the central nervous system, with high levels of expression in the visual system including the retina and optic lobe, and uniform expression in the cortex. Detected in the thorax and abdomen, with increased expression in the ventral ganglion. In males, detected in the reproductive tract including the ejaculatory bulb and testis.

Functionally, in adult males, modulates sexual behavior by playing a role in sex discrimination and maintaining normal levels of sexual activity towards both males and females. This is Protein quick-to-court from Drosophila melanogaster (Fruit fly).